The following is a 257-amino-acid chain: NAD-capped RNA hydrolase NudC (257 aa).

Substrate contacts are provided by lysine 25 and arginine 69. The Zn(2+) site is built by cysteine 98 and cysteine 101. Glutamate 111 serves as a coordination point for substrate. Residues cysteine 116 and cysteine 119 each coordinate Zn(2+). Tyrosine 124 is a substrate binding site. One can recognise a Nudix hydrolase domain in the interval 125–248 (PQIAPCIIVA…TVARRLIEDT (124 aa)). A divalent metal cation is bound by residues alanine 158, glutamate 174, and glutamate 178. Residues 159–180 (GFVEVGETLEQAVAREVMEESG) carry the Nudix box motif. 192 to 199 (QPWPFPQS) provides a ligand contact to substrate. Residue glutamate 219 participates in a divalent metal cation binding. A substrate-binding site is contributed by alanine 241.

It belongs to the Nudix hydrolase family. NudC subfamily. As to quaternary structure, homodimer. Requires Mg(2+) as cofactor. Mn(2+) serves as cofactor. The cofactor is Zn(2+).

It carries out the reaction a 5'-end NAD(+)-phospho-ribonucleoside in mRNA + H2O = a 5'-end phospho-adenosine-phospho-ribonucleoside in mRNA + beta-nicotinamide D-ribonucleotide + 2 H(+). It catalyses the reaction NAD(+) + H2O = beta-nicotinamide D-ribonucleotide + AMP + 2 H(+). The enzyme catalyses NADH + H2O = reduced beta-nicotinamide D-ribonucleotide + AMP + 2 H(+). In terms of biological role, mRNA decapping enzyme that specifically removes the nicotinamide adenine dinucleotide (NAD) cap from a subset of mRNAs by hydrolyzing the diphosphate linkage to produce nicotinamide mononucleotide (NMN) and 5' monophosphate mRNA. The NAD-cap is present at the 5'-end of some mRNAs and stabilizes RNA against 5'-processing. Has preference for mRNAs with a 5'-end purine. Catalyzes the hydrolysis of a broad range of dinucleotide pyrophosphates. The chain is NAD-capped RNA hydrolase NudC from Escherichia fergusonii (strain ATCC 35469 / DSM 13698 / CCUG 18766 / IAM 14443 / JCM 21226 / LMG 7866 / NBRC 102419 / NCTC 12128 / CDC 0568-73).